Reading from the N-terminus, the 567-residue chain is Urease subunit alpha (567 aa).

The region spanning G129–F567 is the Urease domain. Ni(2+) is bound by residues H134, H136, and K217. Residue K217 is modified to N6-carboxylysine. Residue H219 coordinates substrate. Ni(2+)-binding residues include H246 and H272. The active-site Proton donor is H320. Residue D360 participates in Ni(2+) binding.

Belongs to the metallo-dependent hydrolases superfamily. Urease alpha subunit family. In terms of assembly, heterotrimer of UreA (gamma), UreB (beta) and UreC (alpha) subunits. Three heterotrimers associate to form the active enzyme. Requires Ni cation as cofactor. Post-translationally, carboxylation allows a single lysine to coordinate two nickel ions.

It localises to the cytoplasm. The catalysed reaction is urea + 2 H2O + H(+) = hydrogencarbonate + 2 NH4(+). It participates in nitrogen metabolism; urea degradation; CO(2) and NH(3) from urea (urease route): step 1/1. The chain is Urease subunit alpha from Aliivibrio fischeri (strain MJ11) (Vibrio fischeri).